A 129-amino-acid chain; its full sequence is Large ribosomal subunit protein uL22 (129 aa).

The protein belongs to the universal ribosomal protein uL22 family. Part of the 50S ribosomal subunit.

Functionally, this protein binds specifically to 23S rRNA; its binding is stimulated by other ribosomal proteins, e.g. L4, L17, and L20. It is important during the early stages of 50S assembly. It makes multiple contacts with different domains of the 23S rRNA in the assembled 50S subunit and ribosome. In terms of biological role, the globular domain of the protein is located near the polypeptide exit tunnel on the outside of the subunit, while an extended beta-hairpin is found that lines the wall of the exit tunnel in the center of the 70S ribosome. This is Large ribosomal subunit protein uL22 from Agrobacterium fabrum (strain C58 / ATCC 33970) (Agrobacterium tumefaciens (strain C58)).